The chain runs to 611 residues: tRNA uridine 5-carboxymethylaminomethyl modification enzyme MnmG (611 aa).

Residues 12–17 (GGGHAG), valine 124, and serine 179 contribute to the FAD site. Position 271–285 (271–285 (GPRYCPSVEDKIVRF)) interacts with NAD(+). An FAD-binding site is contributed by glutamine 368.

Belongs to the MnmG family. In terms of assembly, homodimer. Heterotetramer of two MnmE and two MnmG subunits. FAD serves as cofactor.

The protein resides in the cytoplasm. In terms of biological role, NAD-binding protein involved in the addition of a carboxymethylaminomethyl (cmnm) group at the wobble position (U34) of certain tRNAs, forming tRNA-cmnm(5)s(2)U34. The protein is tRNA uridine 5-carboxymethylaminomethyl modification enzyme MnmG of Mycoplasma mobile (strain ATCC 43663 / 163K / NCTC 11711) (Mesomycoplasma mobile).